The primary structure comprises 508 residues: Protection of telomeres protein tpz1 (508 aa).

The tract at residues 2–223 is pot1-binding; sequence SNCLKHPWLE…ENTTHGIYLE (222 aa). Disordered stretches follow at residues 159–178, 235–269, and 282–358; these read QEAS…NSRD, VSET…PSLP, and PPPF…QSHR. The segment covering 327-347 has biased composition (polar residues); sequence STEQLNSSLTIERSQSIQSTD. Positions 348 to 358 are enriched in basic and acidic residues; that stretch reads SKQRVETQSHR. Positions 379–508 are ccq1/poz1-binding; the sequence is TIDDSTGKLL…KKIEEFRNKS (130 aa).

As to quaternary structure, interacts with ccq1, pot1 and poz1.

Its subcellular location is the chromosome. It localises to the telomere. The protein resides in the nucleus. Telomeric DNA-binding protein that is required to protect the 3'-end telomeric overhang and involved in telomere length regulation. recruits poz1 and ccq1 to telomeres, regulating telomere length negatively and positively respectively. The protein is Protection of telomeres protein tpz1 (tpz1) of Schizosaccharomyces pombe (strain 972 / ATCC 24843) (Fission yeast).